We begin with the raw amino-acid sequence, 375 residues long: Succinyl-diaminopimelate desuccinylase (375 aa).

H66 is a binding site for Zn(2+). The active site involves D68. D99 is a Zn(2+) binding site. E133 serves as the catalytic Proton acceptor. 3 residues coordinate Zn(2+): E134, E162, and H348.

This sequence belongs to the peptidase M20A family. DapE subfamily. As to quaternary structure, homodimer. The cofactor is Zn(2+). Requires Co(2+) as cofactor.

The enzyme catalyses N-succinyl-(2S,6S)-2,6-diaminopimelate + H2O = (2S,6S)-2,6-diaminopimelate + succinate. Its pathway is amino-acid biosynthesis; L-lysine biosynthesis via DAP pathway; LL-2,6-diaminopimelate from (S)-tetrahydrodipicolinate (succinylase route): step 3/3. Its function is as follows. Catalyzes the hydrolysis of N-succinyl-L,L-diaminopimelic acid (SDAP), forming succinate and LL-2,6-diaminopimelate (DAP), an intermediate involved in the bacterial biosynthesis of lysine and meso-diaminopimelic acid, an essential component of bacterial cell walls. The chain is Succinyl-diaminopimelate desuccinylase from Escherichia coli (strain SE11).